The sequence spans 561 residues: Tectonic-like complex member MKS1 (561 aa).

One can recognise a C2 B9-type domain in the interval 314-442 (LRLFVNGEVV…TVSTWRPMEL (129 aa)).

Part of the tectonic-like complex (also named B9 complex). Interacts with TMEM107. Interacts with TCTN3, AHI1, TCTN1, TCTN2, CC2D2A. Interacts with FLNA. Interacts with TMEM67. Interacts with B9D1 and B9D2. As to expression, widely expressed in embryo at 15.5 dpc, with a relatively strong expression in brain, liver, kidney and digits of the upper limbs. Highly expressed in bronchiolar epithelium.

It localises to the cytoplasm. The protein localises to the cytoskeleton. It is found in the cilium basal body. Its subcellular location is the microtubule organizing center. The protein resides in the centrosome. Functionally, component of the tectonic-like complex, a complex localized at the transition zone of primary cilia and acting as a barrier that prevents diffusion of transmembrane proteins between the cilia and plasma membranes. Involved in centrosome migration to the apical cell surface during early ciliogenesis. Required for ciliary structure and function, including a role in regulating length and appropriate number through modulating centrosome duplication. Required for cell branching morphology. In Mus musculus (Mouse), this protein is Tectonic-like complex member MKS1 (Mks1).